A 199-amino-acid polypeptide reads, in one-letter code: dITP/XTP pyrophosphatase (199 aa).

7 to 12 (SNNPGK) contributes to the substrate binding site. The Proton acceptor role is filled by aspartate 68. Aspartate 68 is a binding site for Mg(2+). Residues alanine 69, 154–157 (FGFD), lysine 177, and 182–183 (HR) each bind substrate.

Belongs to the HAM1 NTPase family. In terms of assembly, homodimer. The cofactor is Mg(2+).

It carries out the reaction XTP + H2O = XMP + diphosphate + H(+). The enzyme catalyses dITP + H2O = dIMP + diphosphate + H(+). It catalyses the reaction ITP + H2O = IMP + diphosphate + H(+). In terms of biological role, pyrophosphatase that catalyzes the hydrolysis of nucleoside triphosphates to their monophosphate derivatives, with a high preference for the non-canonical purine nucleotides XTP (xanthosine triphosphate), dITP (deoxyinosine triphosphate) and ITP. Seems to function as a house-cleaning enzyme that removes non-canonical purine nucleotides from the nucleotide pool, thus preventing their incorporation into DNA/RNA and avoiding chromosomal lesions. The polypeptide is dITP/XTP pyrophosphatase (Verminephrobacter eiseniae (strain EF01-2)).